We begin with the raw amino-acid sequence, 388 residues long: Zinc finger protein 1 (388 aa).

The span at 1 to 19 (MSSIPNINWNDPNNGKSNT) shows a compositional bias: polar residues. 3 disordered regions span residues 1-120 (MSSI…QQPL), 157-219 (LQQR…QQWD), and 236-311 (SSIQ…KPIT). Residues 20 to 38 (SRQSQPQPQLPSNVSPPNS) show a composition bias toward low complexity. 2 stretches are compositionally biased toward polar residues: residues 52 to 67 (YGSS…NPNT) and 88 to 97 (YPVQQTAQQR). Composition is skewed to low complexity over residues 102 to 120 (LQQV…QQPL) and 157 to 172 (LQQR…KSQL). Over residues 173–203 (NEQNAMMSASTQQYPVQDFTNPYPNAQNPAE) the composition is skewed to polar residues. 2 stretches are compositionally biased toward low complexity: residues 204 to 217 (QQQQ…QSQQ) and 236 to 259 (SSIQ…KQQQ). The span at 268–278 (KKKPGRKPKLR) shows a compositional bias: basic residues. Positions 282-294 (ESSSETPQVPKTA) are enriched in polar residues. The zn(2)-C6 fungal-type DNA-binding region spans 318–345 (CLTCRQRKKRCCETRPRCTECTRLRLNC). Positions 348–367 (PKPGTEHKNKPKDQKDDENT) are disordered. Basic and acidic residues predominate over residues 351–367 (GTEHKNKPKDQKDDENT).

Its subcellular location is the nucleus. Perhaps a regulatory role. May be involved in transcriptional activation. The chain is Zinc finger protein 1 (CZF1) from Candida albicans (strain WO-1) (Yeast).